The primary structure comprises 236 residues: Phosphoribosylaminoimidazole-succinocarboxamide synthase (236 aa).

Belongs to the SAICAR synthetase family.

It catalyses the reaction 5-amino-1-(5-phospho-D-ribosyl)imidazole-4-carboxylate + L-aspartate + ATP = (2S)-2-[5-amino-1-(5-phospho-beta-D-ribosyl)imidazole-4-carboxamido]succinate + ADP + phosphate + 2 H(+). Its pathway is purine metabolism; IMP biosynthesis via de novo pathway; 5-amino-1-(5-phospho-D-ribosyl)imidazole-4-carboxamide from 5-amino-1-(5-phospho-D-ribosyl)imidazole-4-carboxylate: step 1/2. The chain is Phosphoribosylaminoimidazole-succinocarboxamide synthase from Pseudomonas aeruginosa (strain LESB58).